The chain runs to 374 residues: Bifunctional enzyme IspD/IspF (374 aa).

Residues 1–213 (MLDVTLIVLC…PCLKAPSNNF (213 aa)) are 2-C-methyl-D-erythritol 4-phosphate cytidylyltransferase. Residues 214-374 (FTGTGFDIHA…TLKYYNWKKR (161 aa)) form a 2-C-methyl-D-erythritol 2,4-cyclodiphosphate synthase region. Aspartate 220 and histidine 222 together coordinate a divalent metal cation. 4-CDP-2-C-methyl-D-erythritol 2-phosphate contacts are provided by residues 220–222 (DIH) and 246–247 (HS). Position 254 (histidine 254) interacts with a divalent metal cation. 4-CDP-2-C-methyl-D-erythritol 2-phosphate contacts are provided by residues 268-270 (DIG), 273-277 (FPDTD), 344-347 (TTAE), phenylalanine 351, and arginine 354.

In the N-terminal section; belongs to the IspD/TarI cytidylyltransferase family. IspD subfamily. The protein in the C-terminal section; belongs to the IspF family. Requires a divalent metal cation as cofactor.

The enzyme catalyses 2-C-methyl-D-erythritol 4-phosphate + CTP + H(+) = 4-CDP-2-C-methyl-D-erythritol + diphosphate. It carries out the reaction 4-CDP-2-C-methyl-D-erythritol 2-phosphate = 2-C-methyl-D-erythritol 2,4-cyclic diphosphate + CMP. The protein operates within isoprenoid biosynthesis; isopentenyl diphosphate biosynthesis via DXP pathway; isopentenyl diphosphate from 1-deoxy-D-xylulose 5-phosphate: step 2/6. It functions in the pathway isoprenoid biosynthesis; isopentenyl diphosphate biosynthesis via DXP pathway; isopentenyl diphosphate from 1-deoxy-D-xylulose 5-phosphate: step 4/6. Functionally, bifunctional enzyme that catalyzes the formation of 4-diphosphocytidyl-2-C-methyl-D-erythritol from CTP and 2-C-methyl-D-erythritol 4-phosphate (MEP) (IspD), and catalyzes the conversion of 4-diphosphocytidyl-2-C-methyl-D-erythritol 2-phosphate (CDP-ME2P) to 2-C-methyl-D-erythritol 2,4-cyclodiphosphate (ME-CPP) with a corresponding release of cytidine 5-monophosphate (CMP) (IspF). The sequence is that of Bifunctional enzyme IspD/IspF from Aliarcobacter butzleri (strain RM4018) (Arcobacter butzleri).